We begin with the raw amino-acid sequence, 405 residues long: Phosphatidylinositol 5-phosphate 4-kinase type-2 alpha (405 aa).

Residues 32-404 enclose the PIPK domain; the sequence is ASDPLLSVLM…RFLDFIANIL (373 aa). The interval 287-326 is disordered; sequence QEEVECEENDGEDEGESDGTHPIGTPPDSPGNTLNSSLPL. The segment covering 288–303 has biased composition (acidic residues); the sequence is EEVECEENDGEDEGES.

Homodimer. In terms of processing, phosphorylated in tyrosines. Phosphorylation is induced by light and increases kinase activity.

It is found in the cell membrane. Its subcellular location is the nucleus. The protein resides in the lysosome. It localises to the cytoplasm. It catalyses the reaction a 1,2-diacyl-sn-glycero-3-phospho-(1D-myo-inositol-5-phosphate) + ATP = a 1,2-diacyl-sn-glycero-3-phospho-(1D-myo-inositol-4,5-bisphosphate) + ADP + H(+). The catalysed reaction is 1,2-dihexadecanoyl-sn-glycero-3-phospho-(1D-myo-inositol-5-phosphate) + ATP = 1,2-dihexadecanoyl-sn-glycero-3-phospho-(1D-myo-inositol-4,5-bisphosphate) + ADP + H(+). The enzyme catalyses 1,2-dihexadecanoyl-sn-glycero-3-phospho-(1D-myo-inositol-5-phosphate) + GTP = 1,2-dihexadecanoyl-sn-glycero-3-phospho-(1D-myo-inositol-4,5-bisphosphate) + GDP + H(+). In rod outer segments, activated by light. Functionally, catalyzes the phosphorylation of phosphatidylinositol 5-phosphate (PtdIns5P) on the fourth hydroxyl of the myo-inositol ring, to form phosphatidylinositol 4,5-bisphosphate (PtdIns(4,5)P2). Has both ATP- and GTP-dependent kinase activities. The polypeptide is Phosphatidylinositol 5-phosphate 4-kinase type-2 alpha (PIP4K2A) (Gallus gallus (Chicken)).